The following is a 138-amino-acid chain: Basic phospholipase A2 homolog CTs-K49a (138 aa).

Positions 1–16 (MRTLWIMAVLLVVVEG) are cleaved as a signal peptide. 6 cysteine pairs are disulfide-bonded: C42/C131, C44/C60, C59/C111, C65/C138, C66/C104, and C91/C102. The interval 121–133 (KKKKINLKLFCKK) is important for membrane-damaging activities in eukaryotes and bacteria; heparin-binding.

Belongs to the phospholipase A2 family. Group II subfamily. K49 sub-subfamily. In terms of tissue distribution, expressed by the venom gland.

Its subcellular location is the secreted. Snake venom phospholipase A2 homolog that lacks catalytic activity. It shows myotoxic and weak anticoagulant activities. A model of myotoxic mechanism has been proposed: an apo Lys49-PLA2 is activated by the entrance of a hydrophobic molecule (e.g. fatty acid) at the hydrophobic channel of the protein leading to a reorientation of a monomer. This reorientation causes a transition between 'inactive' to 'active' states, causing alignment of C-terminal and membrane-docking sites (MDoS) side-by-side and putting the membrane-disruption sites (MDiS) in the same plane, exposed to solvent and in a symmetric position for both monomers. The MDoS region stabilizes the toxin on membrane by the interaction of charged residues with phospholipid head groups. Subsequently, the MDiS region destabilizes the membrane with penetration of hydrophobic residues. This insertion causes a disorganization of the membrane, allowing an uncontrolled influx of ions (i.e. calcium and sodium), and eventually triggering irreversible intracellular alterations and cell death. This chain is Basic phospholipase A2 homolog CTs-K49a, found in Trimeresurus stejnegeri (Chinese green tree viper).